The sequence spans 269 residues: Voltage-gated hydrogen channel 1 (269 aa).

Over 1 to 96 (MTSHDPKAVT…RLRKLFSSHR (96 aa)) the chain is Cytoplasmic. T29 is subject to Phosphothreonine. Positions 46 to 79 (ENEEEEEEPAPTSAEGEGNAEGPDAEAGSASTPR) are disordered. S93 is subject to Phosphoserine. The helical transmembrane segment at 97–117 (FQVIIICLVVLDALLVLAELL) threads the bilayer. At 118–134 (LDLKIIEPDEQDYAVTA) the chain is on the extracellular side. Residues 135 to 157 (FHYMSFAILVFFMLEIFFKIFVF) form a helical membrane-spanning segment. Residues 158-165 (RLEFFHHK) lie on the Cytoplasmic side of the membrane. Residues 166 to 186 (FEILDAFVVVVSFVLDLVLLF) form a helical membrane-spanning segment. Over 187–193 (KSHHFEA) the chain is Extracellular. Residues 194 to 214 (LGLLILLRLWRVARIINGIII) traverse the membrane as a helical segment. Residues 215-269 (SVKTRSERQILRLKQINIQLATKIQHLEFSCSEKEQEIERLNKLLKQNGLLGDVN) are Cytoplasmic-facing. Residues 221–261 (ERQILRLKQINIQLATKIQHLEFSCSEKEQEIERLNKLLKQ) are a coiled coil.

This sequence belongs to the voltage-gated proton channel (VPC) (TC 1.A.51) family. Homodimer; each protomer forms its own proton conduction pathway. In terms of processing, phosphorylated in vitro by PRKCD. Phosphorylation may enhance channel gating. In terms of tissue distribution, enriched in immune tissues, such as bone marrow, macrophages and spleen.

The protein resides in the cell membrane. The protein localises to the apical cell membrane. Its subcellular location is the cytoplasmic vesicle. It localises to the phagosome membrane. It is found in the cell projection. The protein resides in the cilium. The protein localises to the flagellum membrane. The enzyme catalyses H(+)(in) = H(+)(out). With respect to regulation, the dimers display cooperative channel gating. The channel activity is inhibited by zinc ions. Functionally, voltage-gated proton-selective channel that conducts outward proton currents in response to intracellular acidification. Lacks a canonical ion-channel pore domain and mediates proton permeability via its voltage sensor domain. Provides for proton efflux that compensates for electron charge generated by NADPH oxidase activity either in the extracellular or phagosomal compartments, thus enabling the production of high levels of bactericidal reactive oxygen species during the respiratory burst. Opens when the pH of airway surface liquid exceeds 7 and contributes to respiratory epithelial acid secretion to maintain pH in the mucosa. This Mus musculus (Mouse) protein is Voltage-gated hydrogen channel 1.